The chain runs to 240 residues: Ditrans,polycis-undecaprenyl-diphosphate synthase ((2E,6E)-farnesyl-diphosphate specific) (240 aa).

The active site involves Asp18. Asp18 is a binding site for Mg(2+). Substrate contacts are provided by residues 19-22, Trp23, Arg31, His35, and 63-65; these read GNGR and SSE. Asn66 (proton acceptor) is an active-site residue. Substrate is bound by residues Trp67, Arg69, Arg186, and 192–194; that span reads RIS. Mg(2+) is bound at residue Glu205.

It belongs to the UPP synthase family. Homodimer. The cofactor is Mg(2+).

The catalysed reaction is 8 isopentenyl diphosphate + (2E,6E)-farnesyl diphosphate = di-trans,octa-cis-undecaprenyl diphosphate + 8 diphosphate. Its function is as follows. Catalyzes the sequential condensation of isopentenyl diphosphate (IPP) with (2E,6E)-farnesyl diphosphate (E,E-FPP) to yield (2Z,6Z,10Z,14Z,18Z,22Z,26Z,30Z,34E,38E)-undecaprenyl diphosphate (di-trans,octa-cis-UPP). UPP is the precursor of glycosyl carrier lipid in the biosynthesis of bacterial cell wall polysaccharide components such as peptidoglycan and lipopolysaccharide. In Pasteurella multocida (strain Pm70), this protein is Ditrans,polycis-undecaprenyl-diphosphate synthase ((2E,6E)-farnesyl-diphosphate specific).